The primary structure comprises 259 residues: Protein unc-50 homolog (259 aa).

The residue at position 1 (methionine 1) is an N-acetylmethionine. Topologically, residues 1 to 82 (MLPSTSLNSS…TKDQWARDDP (82 aa)) are cytoplasmic. The residue at position 6 (serine 6) is a Phosphoserine. A helical transmembrane segment spans residues 83–103 (AFLVLLSIWLCVSTIGFGFVL). Residues 104 to 115 (DMGFFETIKLLL) lie on the Lumenal side of the membrane. Residues 116 to 136 (WVVFIDCVGVGLLISTLMWFI) traverse the membrane as a helical segment. At 137–163 (SNKYLVKRQSRDYDVEWGYAFDVHLNA) the chain is on the cytoplasmic side. Residues 164-184 (FYPLLVILHFIQLFFINHVIL) form a helical membrane-spanning segment. Topologically, residues 185–187 (TDT) are lumenal. The helical transmembrane segment at 188 to 208 (FIGYLVGNTLWLIAVGYYIYV) threads the bilayer. Residues 209–222 (TFLGYSALPFLKNT) lie on the Cytoplasmic side of the membrane. The chain crosses the membrane as a helical span at residues 223 to 243 (VVLLYPFAPLIVLYGLSLALG). At 244–259 (WNFTHTLCSFYKYRVK) the chain is on the lumenal side.

The protein belongs to the unc-50 family. Expressed in brain, kidney and testis, and at lower levels in heart.

It localises to the nucleus inner membrane. It is found in the golgi apparatus membrane. In terms of biological role, involved in the cell surface expression of neuronal nicotinic receptors. Binds RNA. The chain is Protein unc-50 homolog (Unc50) from Rattus norvegicus (Rat).